Consider the following 403-residue polypeptide: E2F transcription factor-like E2FE (403 aa).

The DNA-binding element occupies 34–99; it reads RKQKSLGLLC…RAKNQYTWKG (66 aa). A disordered region spans residues 128-167; that stretch reads VKGSDDEDDDEESSQPHSSSQTDSSKPGSLPQSSDPSKID. Residues 142–152 are compositionally biased toward low complexity; that stretch reads QPHSSSQTDSS. Residues 153–163 show a composition bias toward polar residues; sequence KPGSLPQSSDP. A DNA-binding region spans residues 169–250; the sequence is RREKSLGLLT…SRKPAFKWLG (82 aa). Residues 282-319 form a disordered region; the sequence is VKRSKSSSSSQENATERRLKMKKHSTPESSYNKSFDVH.

This sequence belongs to the E2F/DP family. In terms of tissue distribution, expressed exclusively in mitotically dividing cells. Highly expressed in young leaves and mature flowers. Lower expression in young stalk and in young and mature flowers.

It is found in the nucleus. In terms of biological role, inhibitor of E2F-dependent activation of gene expression. Binds specifically the E2 recognition site without interacting with DP proteins and prevents transcription activation by E2F/DP heterodimers. Controls the timing of endocycle onset and inhibits endoreduplication. The protein is E2F transcription factor-like E2FE (E2FE) of Arabidopsis thaliana (Mouse-ear cress).